The chain runs to 395 residues: ATP phosphoribosyltransferase regulatory subunit (395 aa).

It belongs to the class-II aminoacyl-tRNA synthetase family. HisZ subfamily. As to quaternary structure, heteromultimer composed of HisG and HisZ subunits.

It is found in the cytoplasm. The protein operates within amino-acid biosynthesis; L-histidine biosynthesis; L-histidine from 5-phospho-alpha-D-ribose 1-diphosphate: step 1/9. Required for the first step of histidine biosynthesis. May allow the feedback regulation of ATP phosphoribosyltransferase activity by histidine. This Pseudomonas putida (strain ATCC 700007 / DSM 6899 / JCM 31910 / BCRC 17059 / LMG 24140 / F1) protein is ATP phosphoribosyltransferase regulatory subunit.